A 451-amino-acid chain; its full sequence is PTS system galactitol-specific EIIC component (451 aa).

The region spanning 6 to 435 (MRYILDLGPT…IYLTGIFMTW (430 aa)) is the PTS EIIC type-2 domain. The next 10 helical transmembrane spans lie at 9–29 (ILDL…SKIL), 41–61 (LHIG…LDSI), 92–112 (ASQI…AMLL), 138–158 (LATG…AFVY), 218–238 (FGPF…IGIL), 305–325 (AVVS…VCVP), 329–349 (VLPF…VAVH), 357–377 (LISG…TIGL), 392–412 (GMVA…IQVF), and 415–435 (QNIP…FMTW).

In terms of assembly, forms a complex with one each of subunit of GatA, GatB and 2 subunits of GatC.

It is found in the cell inner membrane. Its function is as follows. The phosphoenolpyruvate-dependent sugar phosphotransferase system (PTS), a major carbohydrate active transport system, catalyzes the phosphorylation of incoming sugar substrates concomitant with their translocation across the cell membrane. The enzyme II complex composed of GatA, GatB and GatC is involved in galactitol transport. The protein is PTS system galactitol-specific EIIC component (gatC) of Escherichia coli O157:H7.